The sequence spans 371 residues: 3-isopropylmalate dehydrogenase B (371 aa).

79–93 (GSKVDHIRRGLDGPE) is an NAD(+) binding site. Residues R100, R110, R142, and D229 each contribute to the substrate site. Mg(2+) contacts are provided by D229, D254, and D258. An NAD(+)-binding site is contributed by 296 to 308 (GSAPTIAGKNIAN).

The protein belongs to the isocitrate and isopropylmalate dehydrogenases family. In terms of assembly, homodimer. Mg(2+) is required as a cofactor. It depends on Mn(2+) as a cofactor.

Its subcellular location is the cytoplasm. The enzyme catalyses (2R,3S)-3-isopropylmalate + NAD(+) = 4-methyl-2-oxopentanoate + CO2 + NADH. It functions in the pathway amino-acid biosynthesis; L-leucine biosynthesis; L-leucine from 3-methyl-2-oxobutanoate: step 3/4. Its function is as follows. Catalyzes the oxidation of 3-carboxy-2-hydroxy-4-methylpentanoate (3-isopropylmalate) to 3-carboxy-4-methyl-2-oxopentanoate. The product decarboxylates to 4-methyl-2 oxopentanoate. This Aspergillus niger protein is 3-isopropylmalate dehydrogenase B (leu2B).